The sequence spans 60 residues: Small ribosomal subunit protein eS17 (60 aa).

This sequence belongs to the eukaryotic ribosomal protein eS17 family.

The polypeptide is Small ribosomal subunit protein eS17 (Methanosphaera stadtmanae (strain ATCC 43021 / DSM 3091 / JCM 11832 / MCB-3)).